The sequence spans 230 residues: Demethylluteothin O-methyltransferase (230 aa).

The protein belongs to the methyltransferase superfamily.

The enzyme catalyses demethylluteothin + S-adenosyl-L-methionine = luteothin + S-adenosyl-L-homocysteine. It participates in antibiotic biosynthesis. It functions in the pathway polyketide biosynthesis. Methyltransferase involved in the biosynthesis of the antibiotic aureothin, a nitroaryl polyketide metabolite with antifungal, cytotoxic and insecticidal activities. Catalyzes the methylation of demethylluteothin to luteothin (also called deoxyaureothin). Is specific for its gamma-pyrone substrate, and does not act on the alpha-pyrone isomer. The chain is Demethylluteothin O-methyltransferase from Streptomyces thioluteus.